The following is a 121-amino-acid chain: Large ribosomal subunit protein uL14 (121 aa).

Belongs to the universal ribosomal protein uL14 family. In terms of assembly, part of the 50S ribosomal subunit. Forms a cluster with proteins L3 and L19. In the 70S ribosome, L14 and L19 interact and together make contacts with the 16S rRNA in bridges B5 and B8.

Its function is as follows. Binds to 23S rRNA. Forms part of two intersubunit bridges in the 70S ribosome. This chain is Large ribosomal subunit protein uL14, found in Prochlorococcus marinus (strain NATL1A).